The primary structure comprises 92 residues: Small ribosomal subunit protein uS19c (92 aa).

It belongs to the universal ribosomal protein uS19 family.

The protein localises to the plastid. It localises to the chloroplast. In terms of biological role, protein S19 forms a complex with S13 that binds strongly to the 16S ribosomal RNA. This chain is Small ribosomal subunit protein uS19c, found in Psilotum nudum (Whisk fern).